We begin with the raw amino-acid sequence, 219 residues long: MTQQEMKKIAAQAALQFVKPDTIIGVGSGSTVNCFIDALASIKDEIKGAVAASKASEDQLRAMGIEVFNANEVAGLDVYIDGADEITPQGAMIKGGGAALTREKIVSSLAKQFICMVDSSKQVDVLGSSFPLPVEVIPMARSYVARQLVALGGSPEYREGVVTDNGNVILDVHNFNIYEPLKMEHTINNIAGVVTNGIFAQRYANIIIVGTAEGAKIIK.

Substrate-binding positions include 28-31 (SGST), 81-84 (DGAD), and 94-97 (KGGG). Glu103 (proton acceptor) is an active-site residue. A substrate-binding site is contributed by Lys121.

It belongs to the ribose 5-phosphate isomerase family. Homodimer.

The enzyme catalyses aldehydo-D-ribose 5-phosphate = D-ribulose 5-phosphate. Its pathway is carbohydrate degradation; pentose phosphate pathway; D-ribose 5-phosphate from D-ribulose 5-phosphate (non-oxidative stage): step 1/1. Functionally, catalyzes the reversible conversion of ribose-5-phosphate to ribulose 5-phosphate. This is Ribose-5-phosphate isomerase A from Haemophilus ducreyi (strain 35000HP / ATCC 700724).